The sequence spans 315 residues: tRNA dimethylallyltransferase (315 aa).

Position 13–20 (13–20 (GPTASGKT)) interacts with ATP. 15 to 20 (TASGKT) is a substrate binding site. Interaction with substrate tRNA regions lie at residues 38–41 (DSAL), 162–166 (QRLSR), 243–248 (RCVGYR), and 276–283 (KRQITWLR).

The protein belongs to the IPP transferase family. In terms of assembly, monomer. Mg(2+) is required as a cofactor.

The enzyme catalyses adenosine(37) in tRNA + dimethylallyl diphosphate = N(6)-dimethylallyladenosine(37) in tRNA + diphosphate. In terms of biological role, catalyzes the transfer of a dimethylallyl group onto the adenine at position 37 in tRNAs that read codons beginning with uridine, leading to the formation of N6-(dimethylallyl)adenosine (i(6)A). The chain is tRNA dimethylallyltransferase from Vibrio vulnificus (strain YJ016).